A 1133-amino-acid chain; its full sequence is Eukaryotic translation initiation factor 3 subunit A (1133 aa).

Positions 317-498 constitute a PCI domain; that stretch reads IQRMTSHVLI…HCVHFGTDLS (182 aa). Coiled coils occupy residues 573–700 and 784–886; these read KKIE…YFER and EEER…EADS. Residues 810–893 show a composition bias toward basic and acidic residues; sequence KEEERRRAEE…ADSWRDRRGG (84 aa). The disordered stretch occupies residues 810-1133; it reads KEEERRRAEE…DGWTDVKHHR (324 aa). Residues 895 to 909 are compositionally biased toward low complexity; sequence APAAAAQPNPAAQEA. Composition is skewed to basic and acidic residues over residues 920-944, 954-1081, and 1097-1117; these read GARE…RDVR, VERR…DSAW, and TRQD…KEAR.

Belongs to the eIF-3 subunit A family. As to quaternary structure, component of the eukaryotic translation initiation factor 3 (eIF-3) complex.

It is found in the cytoplasm. Its function is as follows. RNA-binding component of the eukaryotic translation initiation factor 3 (eIF-3) complex, which is involved in protein synthesis of a specialized repertoire of mRNAs and, together with other initiation factors, stimulates binding of mRNA and methionyl-tRNAi to the 40S ribosome. The eIF-3 complex specifically targets and initiates translation of a subset of mRNAs involved in cell proliferation. The chain is Eukaryotic translation initiation factor 3 subunit A from Aedes aegypti (Yellowfever mosquito).